Here is a 221-residue protein sequence, read N- to C-terminus: Cutinase 3 (221 aa).

The signal sequence occupies residues 1 to 17; sequence MRFHTILLAALASLVIA. Cystine bridges form between cysteine 44–cysteine 122 and cysteine 70–cysteine 84. Catalysis depends on serine 133, which acts as the Nucleophile. Residues cysteine 184 and cysteine 191 are joined by a disulfide bond. Residue aspartate 188 is part of the active site. The Proton donor/acceptor role is filled by histidine 201.

It belongs to the cutinase family.

The protein resides in the secreted. The catalysed reaction is cutin + H2O = cutin monomers.. Functionally, catalyzes the hydrolysis of complex carboxylic polyesters found in the cell wall of plants. Degrades cutin, a macromolecule that forms the structure of the plant cuticle. Also degrades suberin, a specialized macromolecule found in the cell wall of various plant tissues. The sequence is that of Cutinase 3 from Emericella nidulans (strain FGSC A4 / ATCC 38163 / CBS 112.46 / NRRL 194 / M139) (Aspergillus nidulans).